Here is a 378-residue protein sequence, read N- to C-terminus: Probable 3-hydroxyisobutyryl-CoA hydrolase 2 (378 aa).

Substrate is bound by residues Gly115, Glu138, and Asp146. Positions 376 to 378 (AKL) match the Microbody targeting signal motif.

Belongs to the enoyl-CoA hydratase/isomerase family.

Its subcellular location is the peroxisome. The enzyme catalyses 3-hydroxy-2-methylpropanoyl-CoA + H2O = 3-hydroxy-2-methylpropanoate + CoA + H(+). The protein operates within amino-acid degradation; L-valine degradation. In terms of biological role, involved in valine catabolism. The polypeptide is Probable 3-hydroxyisobutyryl-CoA hydrolase 2 (Arabidopsis thaliana (Mouse-ear cress)).